The sequence spans 442 residues: MSVEYYLSLYAKYNSKNLDVFRNMLQVIEPSGNYHILHAYCGIKGLDERFIEELLHRGYSPNETDDDGNYPLHIASKINNNRIVAMLLVHGADPNACDKHNKTPLYYLSGTDDEVIERINLLVQYGAKINNSVDEEGCGPLLACTDPSERVFKKIMSIGFEARIVDKFGKNHIHRHLMSDNPKASTISWMMKLGISPSKPDHDGNTPLHIVCSKTVKYVDIINLLLPSTDVNKQNKFGDSPLTLLIKTLSPAHLINKLISTSNVITDQTVNICIFYDRDDVLEIINDKGKQYDSTDFKMAVEVGSIRCVKYLLDNDIICEDAMYYAVLSEYETMVDYLLFNHFSVDSIVNGHTCMSECVRLNNPVILSKLMLHNPTSETMYITMKEIEKDKLDKSIIIPFIAYFVLMHPDFCKNCRYFTSYKRFVTDYVHEGVSYEVFDDYF.

ANK repeat units follow at residues 67-96 (DGNY…DPNA), 100-131 (HNKT…KINN), 203-233 (DGNT…DVNK), 237-267 (FGDS…VITD), 292-321 (YDST…ICED), and 323-347 (MYYA…SVDS).

It belongs to the orthopoxvirus OPG037 family. In terms of assembly, may interact with host caspase-9-Apaf-1 complex.

It is found in the host cytoplasm. Its function is as follows. Inhibits host apoptosis. Acts by associating with host apoptosome. This chain is Inhibitor of Apoptosis OPG037 (OPG037), found in Monkeypox virus.